A 317-amino-acid polypeptide reads, in one-letter code: tRNA(Met) cytidine acetate ligase (317 aa).

Residues 6 to 19, G100, N157, and R182 contribute to the ATP site; that span reads IAEY…HIYQ.

The protein belongs to the TmcAL family.

The protein localises to the cytoplasm. The enzyme catalyses cytidine(34) in elongator tRNA(Met) + acetate + ATP = N(4)-acetylcytidine(34) in elongator tRNA(Met) + AMP + diphosphate. Its function is as follows. Catalyzes the formation of N(4)-acetylcytidine (ac(4)C) at the wobble position of elongator tRNA(Met), using acetate and ATP as substrates. First activates an acetate ion to form acetyladenylate (Ac-AMP) and then transfers the acetyl group to tRNA to form ac(4)C34. In Mesomycoplasma hyopneumoniae (strain J / ATCC 25934 / NCTC 10110) (Mycoplasma hyopneumoniae), this protein is tRNA(Met) cytidine acetate ligase.